A 203-amino-acid chain; its full sequence is VPS4-associated protein 1 (203 aa).

Basic and acidic residues predominate over residues 99 to 109 (EKETNNSKDPD). 2 disordered regions span residues 99 to 125 (EKET…AKND) and 171 to 193 (QVNR…EELL). Positions 110-120 (PTTTDSTDTSP) are enriched in low complexity. Positions 121-157 (QAKNDAEILSETKKQYSKILDKVTELQRKNRKYELAK) form a coiled coil. The span at 171-182 (QVNRERYLKEQE) shows a compositional bias: basic and acidic residues.

In terms of assembly, interacts with VPS4.

It is found in the cytoplasm. Its subcellular location is the endosome. In terms of biological role, VPS4-associated protein involved in trafficking to the vacuole. This chain is VPS4-associated protein 1 (VFA1), found in Saccharomyces cerevisiae (strain ATCC 204508 / S288c) (Baker's yeast).